The sequence spans 314 residues: L-lactate dehydrogenase 2 (314 aa).

Residues Val-16, Asp-37, Lys-42, Tyr-68, and 82–83 (GL) each bind NAD(+). Substrate is bound by residues Gln-85, Arg-91, and 123–126 (NPVD). Residues 121-123 (ATN) and Ser-146 each bind NAD(+). 151 to 154 (DSAR) is a substrate binding site. Beta-D-fructose 1,6-bisphosphate contacts are provided by Arg-156 and His-171. Catalysis depends on His-178, which acts as the Proton acceptor. The residue at position 223 (Tyr-223) is a Phosphotyrosine. Thr-232 is a binding site for substrate.

The protein belongs to the LDH/MDH superfamily. LDH family. In terms of assembly, homotetramer.

It localises to the cytoplasm. The catalysed reaction is (S)-lactate + NAD(+) = pyruvate + NADH + H(+). It participates in fermentation; pyruvate fermentation to lactate; (S)-lactate from pyruvate: step 1/1. Its activity is regulated as follows. Allosterically activated by fructose 1,6-bisphosphate (FBP). Its function is as follows. Catalyzes the conversion of lactate to pyruvate. This is L-lactate dehydrogenase 2 from Bacillus cereus (strain ATCC 14579 / DSM 31 / CCUG 7414 / JCM 2152 / NBRC 15305 / NCIMB 9373 / NCTC 2599 / NRRL B-3711).